Reading from the N-terminus, the 200-residue chain is NADH-quinone oxidoreductase subunit C (200 aa).

Belongs to the complex I 30 kDa subunit family. NDH-1 is composed of 14 different subunits. Subunits NuoB, C, D, E, F, and G constitute the peripheral sector of the complex.

The protein localises to the cell inner membrane. It carries out the reaction a quinone + NADH + 5 H(+)(in) = a quinol + NAD(+) + 4 H(+)(out). NDH-1 shuttles electrons from NADH, via FMN and iron-sulfur (Fe-S) centers, to quinones in the respiratory chain. The immediate electron acceptor for the enzyme in this species is believed to be ubiquinone. Couples the redox reaction to proton translocation (for every two electrons transferred, four hydrogen ions are translocated across the cytoplasmic membrane), and thus conserves the redox energy in a proton gradient. This Paraburkholderia phytofirmans (strain DSM 17436 / LMG 22146 / PsJN) (Burkholderia phytofirmans) protein is NADH-quinone oxidoreductase subunit C.